The primary structure comprises 162 residues: Ribosome maturation factor RimP (162 aa).

Belongs to the RimP family.

Its subcellular location is the cytoplasm. In terms of biological role, required for maturation of 30S ribosomal subunits. The protein is Ribosome maturation factor RimP of Leptospira borgpetersenii serovar Hardjo-bovis (strain JB197).